Consider the following 879-residue polypeptide: Phosphoenolpyruvate carboxylase (879 aa).

Residues His-137 and Lys-545 contribute to the active site.

The protein belongs to the PEPCase type 1 family. Requires Mg(2+) as cofactor.

It carries out the reaction oxaloacetate + phosphate = phosphoenolpyruvate + hydrogencarbonate. Its function is as follows. Forms oxaloacetate, a four-carbon dicarboxylic acid source for the tricarboxylic acid cycle. The protein is Phosphoenolpyruvate carboxylase of Yersinia enterocolitica serotype O:8 / biotype 1B (strain NCTC 13174 / 8081).